The primary structure comprises 396 residues: Phosphopentomutase (396 aa).

D14, D286, H291, D327, H328, and H339 together coordinate Mn(2+).

It belongs to the phosphopentomutase family. It depends on Mn(2+) as a cofactor.

It localises to the cytoplasm. It catalyses the reaction 2-deoxy-alpha-D-ribose 1-phosphate = 2-deoxy-D-ribose 5-phosphate. The catalysed reaction is alpha-D-ribose 1-phosphate = D-ribose 5-phosphate. It participates in carbohydrate degradation; 2-deoxy-D-ribose 1-phosphate degradation; D-glyceraldehyde 3-phosphate and acetaldehyde from 2-deoxy-alpha-D-ribose 1-phosphate: step 1/2. Functionally, isomerase that catalyzes the conversion of deoxy-ribose 1-phosphate (dRib-1-P) and ribose 1-phosphate (Rib-1-P) to deoxy-ribose 5-phosphate (dRib-5-P) and ribose 5-phosphate (Rib-5-P), respectively. This chain is Phosphopentomutase, found in Staphylococcus epidermidis (strain ATCC 35984 / DSM 28319 / BCRC 17069 / CCUG 31568 / BM 3577 / RP62A).